The following is a 137-amino-acid chain: Probable disulfide formation protein C (137 aa).

A helical membrane pass occupies residues 6–25 (ENLMLGSWLTALTAMLGSLY). An intrachain disulfide couples C35 to C38. 2 consecutive transmembrane segments (helical) span residues 40–59 (YQRI…YLKR) and 66–83 (YSLW…YHYS). C97 and C102 are joined by a disulfide. The helical transmembrane segment at 111-133 (GFVTIPFLAFTAFVIIFICSLLI) threads the bilayer.

This sequence belongs to the DsbB family. BdbC subfamily.

The protein resides in the cell membrane. Its function is as follows. Required for disulfide bond formation in some proteins. The protein is Probable disulfide formation protein C of Halalkalibacterium halodurans (strain ATCC BAA-125 / DSM 18197 / FERM 7344 / JCM 9153 / C-125) (Bacillus halodurans).